Consider the following 116-residue polypeptide: Large ribosomal subunit protein bL19 (116 aa).

This sequence belongs to the bacterial ribosomal protein bL19 family.

This protein is located at the 30S-50S ribosomal subunit interface and may play a role in the structure and function of the aminoacyl-tRNA binding site. This is Large ribosomal subunit protein bL19 from Azotobacter vinelandii (strain DJ / ATCC BAA-1303).